The following is a 335-amino-acid chain: Vitamin B12 import system permease protein BtuC (335 aa).

The next 9 membrane-spanning stretches (helical) occupy residues 22–42 (LLLL…AGDV), 67–87 (LAVM…QSLF), 94–114 (PGLL…VLLG), 117–137 (LLPV…MTFL), 153–173 (LLVG…AVYF), 200–220 (LVLA…ALNF), 243–263 (VLAI…IGFV), 281–301 (YLLP…DVVA), and 308–328 (AELP…IWLL).

The protein belongs to the binding-protein-dependent transport system permease family. FecCD subfamily. As to quaternary structure, the complex is composed of two ATP-binding proteins (BtuD), two transmembrane proteins (BtuC) and a solute-binding protein (BtuF).

It localises to the cell inner membrane. Its function is as follows. Part of the ABC transporter complex BtuCDF involved in vitamin B12 import. Involved in the translocation of the substrate across the membrane. The sequence is that of Vitamin B12 import system permease protein BtuC from Serratia proteamaculans (strain 568).